A 441-amino-acid polypeptide reads, in one-letter code: tRNA(Ile)-lysidine synthase (441 aa).

An ATP-binding site is contributed by Ser-28–Ser-33.

Belongs to the tRNA(Ile)-lysidine synthase family.

The protein localises to the cytoplasm. It catalyses the reaction cytidine(34) in tRNA(Ile2) + L-lysine + ATP = lysidine(34) in tRNA(Ile2) + AMP + diphosphate + H(+). Ligates lysine onto the cytidine present at position 34 of the AUA codon-specific tRNA(Ile) that contains the anticodon CAU, in an ATP-dependent manner. Cytidine is converted to lysidine, thus changing the amino acid specificity of the tRNA from methionine to isoleucine. This chain is tRNA(Ile)-lysidine synthase, found in Orientia tsutsugamushi (strain Boryong) (Rickettsia tsutsugamushi).